A 409-amino-acid polypeptide reads, in one-letter code: Nitrogen permease regulator 2 homolog (409 aa).

Belongs to the NPR2 family.

It localises to the cytoplasm. Its subcellular location is the nucleus. Its function is as follows. Mediates inactivation of the TORC1 complex in response to amino acid starvation. Post-transcriptional regulator of nitrogen permeases. In Schizosaccharomyces pombe (strain 972 / ATCC 24843) (Fission yeast), this protein is Nitrogen permease regulator 2 homolog.